The following is a 302-amino-acid chain: Beta-1,2-mannobiose phosphorylase (302 aa).

It belongs to the glycosyl hydrolase 130 family. In terms of assembly, monomer.

It carries out the reaction beta-D-mannopyranosyl-(1-&gt;2)-D-mannopyranose + phosphate = alpha-D-mannose 1-phosphate + D-mannose. It functions in the pathway nucleotide-sugar biosynthesis; GDP-alpha-D-mannose biosynthesis. In terms of biological role, probably involved in a salvage pathway for GDP-D-mannose biosynthesis. Catalyzes the reversible phosphorolysis of 1,2-beta-oligomannan. In phosphorolytic reactions, prefers beta-1,2-mannobiose (beta-1,2-Man2) as substrate. Produces alpha-D-mannose 1-phosphate, which is the precursor of GDP-D-mannose. The protein is Beta-1,2-mannobiose phosphorylase of Thermoanaerobacter sp. (strain X514).